A 94-amino-acid chain; its full sequence is Co-chaperonin GroES (94 aa).

Belongs to the GroES chaperonin family. In terms of assembly, heptamer of 7 subunits arranged in a ring. Interacts with the chaperonin GroEL.

It localises to the cytoplasm. In terms of biological role, together with the chaperonin GroEL, plays an essential role in assisting protein folding. The GroEL-GroES system forms a nano-cage that allows encapsulation of the non-native substrate proteins and provides a physical environment optimized to promote and accelerate protein folding. GroES binds to the apical surface of the GroEL ring, thereby capping the opening of the GroEL channel. This chain is Co-chaperonin GroES, found in Latilactobacillus sakei subsp. sakei (strain 23K) (Lactobacillus sakei subsp. sakei).